Here is a 242-residue protein sequence, read N- to C-terminus: Purine nucleoside phosphorylase PA4543 (242 aa).

Zn(2+) contacts are provided by His69, Cys103, and His120.

The protein belongs to the purine nucleoside phosphorylase YfiH/LACC1 family. As to quaternary structure, homodimer. It depends on Cu(2+) as a cofactor. The cofactor is Zn(2+).

It catalyses the reaction adenosine + phosphate = alpha-D-ribose 1-phosphate + adenine. The catalysed reaction is S-methyl-5'-thioadenosine + phosphate = 5-(methylsulfanyl)-alpha-D-ribose 1-phosphate + adenine. It carries out the reaction inosine + phosphate = alpha-D-ribose 1-phosphate + hypoxanthine. The enzyme catalyses adenosine + H2O + H(+) = inosine + NH4(+). Its function is as follows. Purine nucleoside enzyme that catalyzes the phosphorolysis of adenosine and inosine nucleosides, yielding D-ribose 1-phosphate and the respective free bases, adenine and hypoxanthine. Also catalyzes the phosphorolysis of S-methyl-5'-thioadenosine into adenine and S-methyl-5-thio-alpha-D-ribose 1-phosphate. Also has adenosine deaminase activity. The chain is Purine nucleoside phosphorylase PA4543 from Pseudomonas aeruginosa (strain ATCC 15692 / DSM 22644 / CIP 104116 / JCM 14847 / LMG 12228 / 1C / PRS 101 / PAO1).